Consider the following 353-residue polypeptide: Ribosomal RNA small subunit methyltransferase H (353 aa).

S-adenosyl-L-methionine is bound by residues 50-52 (GGY), aspartate 69, phenylalanine 96, aspartate 117, and glutamine 124. Residues 276–353 (AAQASRHVPG…PAPQGRGPRR (78 aa)) form a disordered region.

The protein belongs to the methyltransferase superfamily. RsmH family.

It is found in the cytoplasm. The enzyme catalyses cytidine(1402) in 16S rRNA + S-adenosyl-L-methionine = N(4)-methylcytidine(1402) in 16S rRNA + S-adenosyl-L-homocysteine + H(+). In terms of biological role, specifically methylates the N4 position of cytidine in position 1402 (C1402) of 16S rRNA. This chain is Ribosomal RNA small subunit methyltransferase H, found in Methylorubrum extorquens (strain CM4 / NCIMB 13688) (Methylobacterium extorquens).